The primary structure comprises 1154 residues: Kinesin-like protein KIN-7E, chloroplastic (1154 aa).

2 stretches are compositionally biased toward low complexity: residues 1 to 14 (MSSS…SISP) and 29 to 109 (VAAA…PPVA). The transit peptide at 1 to 21 (MSSSSRPGRASISPFRSRRTS) directs the protein to the chloroplast. The disordered stretch occupies residues 1-109 (MSSSSRPGRA…RAAGRAPPVA (109 aa)). Residues 119–437 (NIMVTVRFRP…LKFAHRSKHI (319 aa)) form the Kinesin motor domain. 199–206 (GVTSSGKT) provides a ligand contact to ATP. Residues 441–523 (ASQNKIIDEK…AALMGRIQRL (83 aa)) are a coiled coil. The segment at 620–674 (LSTSVDSESTASGSPSFSRSSQQKHPLLDLKDGRRKSMTRKGDDPALTDSFPGRT) is disordered. A compositionally biased stretch (low complexity) spans 628–640 (STASGSPSFSRSS). 2 coiled-coil regions span residues 734–761 (DSQI…LEQR) and 801–845 (ADNR…DNVA). A disordered region spans residues 838 to 885 (AKNEDNVASMQSSEPSSTSSNPRDLANEVASHSKMPSRTTEDHTESPL). Low complexity predominate over residues 846 to 857 (SMQSSEPSSTSS). A coiled-coil region spans residues 894–967 (AEIENLKLDK…DLAAAKDQTR (74 aa)).

The protein belongs to the TRAFAC class myosin-kinesin ATPase superfamily. Kinesin family. KIN-7 subfamily.

It is found in the plastid. Its subcellular location is the chloroplast. This Oryza sativa subsp. japonica (Rice) protein is Kinesin-like protein KIN-7E, chloroplastic.